The primary structure comprises 405 residues: L-carnitine CoA-transferase (405 aa).

Residues K97 and R104 each contribute to the CoA site. The Nucleophile role is filled by D169.

This sequence belongs to the CoA-transferase III family. CaiB subfamily. Homodimer.

The protein localises to the cytoplasm. The enzyme catalyses crotonobetainyl-CoA + (R)-carnitine = crotonobetaine + (R)-carnitinyl-CoA. It carries out the reaction 4-(trimethylamino)butanoyl-CoA + (R)-carnitine = (R)-carnitinyl-CoA + 4-(trimethylamino)butanoate. Its pathway is amine and polyamine metabolism; carnitine metabolism. Its function is as follows. Catalyzes the reversible transfer of the CoA moiety from gamma-butyrobetainyl-CoA to L-carnitine to generate L-carnitinyl-CoA and gamma-butyrobetaine. Is also able to catalyze the reversible transfer of the CoA moiety from gamma-butyrobetainyl-CoA or L-carnitinyl-CoA to crotonobetaine to generate crotonobetainyl-CoA. The chain is L-carnitine CoA-transferase from Shigella flexneri serotype 5b (strain 8401).